The sequence spans 609 residues: Chaperone protein DnaK (609 aa).

Thr-173 bears the Phosphothreonine; by autocatalysis mark. Residues 580-609 form a disordered region; sequence QAAQGGGAEGQEPKKDNVVDADYEVVDDKK. The segment covering 598 to 609 has biased composition (acidic residues); sequence VDADYEVVDDKK.

This sequence belongs to the heat shock protein 70 family.

In terms of biological role, acts as a chaperone. The polypeptide is Chaperone protein DnaK (Brevibacillus brevis (strain 47 / JCM 6285 / NBRC 100599)).